The chain runs to 332 residues: Cilia- and flagella-associated protein 119 (332 aa).

The span at 1-10 (MITPRSSQSL) shows a compositional bias: polar residues. Disordered stretches follow at residues 1-70 (MITP…ANLF), 246-271 (EDEEATVEQAATPQEEEPEAVTEAEQ), and 308-332 (RLSNRLAALERPYQTPPSKGKSKAK). The span at 14–30 (VQTELEHSPKLQEEPDR) shows a compositional bias: basic and acidic residues. Residues 49-58 (ESPAEATSSP) are compositionally biased toward polar residues. Residues 287–308 (LNKELRQLQQLVEERLKESEER) are a coiled coil.

Specifically expressed in testis (at protein level).

The protein resides in the cell projection. It localises to the cilium. The protein localises to the flagellum. Its subcellular location is the cytoplasmic vesicle. It is found in the secretory vesicle. The protein resides in the acrosome. It localises to the cytoplasm. The polypeptide is Cilia- and flagella-associated protein 119 (Rattus norvegicus (Rat)).